The following is a 370-amino-acid chain: Putative transposase InsL for insertion sequence element IS186A (370 aa).

It belongs to the transposase 11 family.

In terms of biological role, involved in the transposition of the insertion sequence IS186. The protein is Putative transposase InsL for insertion sequence element IS186A (insL1) of Escherichia coli (strain K12).